Consider the following 177-residue polypeptide: ATP synthase subunit delta (177 aa).

Belongs to the ATPase delta chain family. F-type ATPases have 2 components, F(1) - the catalytic core - and F(0) - the membrane proton channel. F(1) has five subunits: alpha(3), beta(3), gamma(1), delta(1), epsilon(1). F(0) has three main subunits: a(1), b(2) and c(10-14). The alpha and beta chains form an alternating ring which encloses part of the gamma chain. F(1) is attached to F(0) by a central stalk formed by the gamma and epsilon chains, while a peripheral stalk is formed by the delta and b chains.

Its subcellular location is the cell inner membrane. Functionally, f(1)F(0) ATP synthase produces ATP from ADP in the presence of a proton or sodium gradient. F-type ATPases consist of two structural domains, F(1) containing the extramembraneous catalytic core and F(0) containing the membrane proton channel, linked together by a central stalk and a peripheral stalk. During catalysis, ATP synthesis in the catalytic domain of F(1) is coupled via a rotary mechanism of the central stalk subunits to proton translocation. In terms of biological role, this protein is part of the stalk that links CF(0) to CF(1). It either transmits conformational changes from CF(0) to CF(1) or is implicated in proton conduction. The polypeptide is ATP synthase subunit delta (Shewanella woodyi (strain ATCC 51908 / MS32)).